Here is a 260-residue protein sequence, read N- to C-terminus: 33 kDa inner dynein arm light chain, axonemal (260 aa).

Positions 1–66 are disordered; sequence MIPPNASLVK…PVESQKAQQT (66 aa). Residues 177–260 adopt a coiled-coil conformation; sequence MRKALQAEQG…LEGIIAPNKK (84 aa).

This sequence belongs to the inner dynein arm light chain family. May undergo some post-translational modifications that shift its mobility on SDS gels.

May play a dynamic role in flagellar motility. The sequence is that of 33 kDa inner dynein arm light chain, axonemal from Strongylocentrotus purpuratus (Purple sea urchin).